We begin with the raw amino-acid sequence, 335 residues long: Glutaredoxin-3 (335 aa).

Ala2 bears the N-acetylalanine mark. Residues 2–117 (AAGAAEAAVA…LTKKVQRHAS (116 aa)) enclose the Thioredoxin domain. Phosphoserine is present on residues Ser117 and Ser120. Glutaredoxin domains are found at residues 144–236 (APCM…PKLE) and 237–335 (ERLK…RGEN). Cys159 and Cys261 together coordinate [2Fe-2S] cluster.

As to quaternary structure, homodimer; the homodimer is independent of 2Fe-2S clusters. Heterotrimer; forms a heterotrimeric complex composed by two BOLA2 molecules and one GLRX3 molecule; linked by [2Fe-2S] clusters. Interacts (via N-terminus) with PRKCQ/PKC-theta. Interacts (via C-terminus) with CSRP3. Interacts with CSRP2. Expressed in heart, spleen, testis and, to a lower extent, in thymus and peripheral blood leukocytes. Weakly expressed in lung, placenta, colon and small intestine.

The protein resides in the cytoplasm. Its subcellular location is the cytosol. The protein localises to the cell cortex. It localises to the myofibril. It is found in the sarcomere. The protein resides in the z line. Functionally, together with BOLA2, acts as a cytosolic iron-sulfur (Fe-S) cluster assembly factor that facilitates [2Fe-2S] cluster insertion into a subset of cytosolic proteins. Acts as a critical negative regulator of cardiac hypertrophy and a positive inotropic regulator. Required for hemoglobin maturation. Does not possess any thyoredoxin activity since it lacks the conserved motif that is essential for catalytic activity. The protein is Glutaredoxin-3 (GLRX3) of Homo sapiens (Human).